We begin with the raw amino-acid sequence, 110 residues long: UPF0122 protein lin1916 (110 aa).

The protein belongs to the UPF0122 family.

Functionally, might take part in the signal recognition particle (SRP) pathway. This is inferred from the conservation of its genetic proximity to ftsY/ffh. May be a regulatory protein. The protein is UPF0122 protein lin1916 of Listeria innocua serovar 6a (strain ATCC BAA-680 / CLIP 11262).